A 269-amino-acid polypeptide reads, in one-letter code: uncharacterized protein (269 aa).

The next 6 helical transmembrane spans lie at 21–43 (LNVWSITLFQNFRLTAELIILFT), 48–70 (LFLIPVMNVFAFFIHNVVNFSLI), 121–143 (YLILLFVSLLILGLITGITVFTF), 147–166 (FIIAYLIFIVLLLILYFWII), 205–227 (SLEVLFSSFVIGFFSLFIFLFQF), and 242–264 (FVAFSNTLLIYLFGVISVSYLLW).

It localises to the cell membrane. This is an uncharacterized protein from Aquifex aeolicus (strain VF5).